The chain runs to 454 residues: Phosphoglucosamine mutase (454 aa).

The Phosphoserine intermediate role is filled by serine 101. Mg(2+) contacts are provided by serine 101, aspartate 243, aspartate 245, and aspartate 247. Serine 101 bears the Phosphoserine mark.

The protein belongs to the phosphohexose mutase family. Mg(2+) is required as a cofactor. Post-translationally, activated by phosphorylation.

The enzyme catalyses alpha-D-glucosamine 1-phosphate = D-glucosamine 6-phosphate. Functionally, catalyzes the conversion of glucosamine-6-phosphate to glucosamine-1-phosphate. The protein is Phosphoglucosamine mutase of Geotalea daltonii (strain DSM 22248 / JCM 15807 / FRC-32) (Geobacter daltonii).